The primary structure comprises 229 residues: Clathrin light chain B (229 aa).

Low complexity-rich tracts occupy residues 1–17 and 45–58; these read MAEDFGFFSSSESGAPE and GAPAASQVASAQPG. The interval 1-70 is disordered; sequence MAEDFGFFSS…SGAGSEDMST (70 aa). Residues serine 11 and serine 13 each carry the phosphoserine modification. An involved in binding clathrin heavy chain region spans residues 93-155; sequence ADRLTQEPES…QVEKNKINNR (63 aa). Threonine 187 is subject to Phosphothreonine. A disulfide bridge links cysteine 199 with cysteine 209. At lysine 204 the chain carries N6-acetyllysine. Serine 217 is subject to Phosphoserine.

This sequence belongs to the clathrin light chain family. Clathrin coats are formed from molecules containing 3 heavy chains and 3 light chains. Interacts (via N-terminus) with HIP1. Interacts with HIP1R.

It localises to the cytoplasmic vesicle membrane. It is found in the membrane. The protein localises to the coated pit. Its function is as follows. Clathrin is the major protein of the polyhedral coat of coated pits and vesicles. The protein is Clathrin light chain B (Cltb) of Mus musculus (Mouse).